Consider the following 237-residue polypeptide: Ditrans,polycis-undecaprenyl-diphosphate synthase ((2E,6E)-farnesyl-diphosphate specific) (237 aa).

Asp-11 is a catalytic residue. Residue Asp-11 coordinates Mg(2+). Residues 12–15 (GNGR), Trp-16, Arg-24, His-28, and 56–58 (SIE) contribute to the substrate site. Asn-59 serves as the catalytic Proton acceptor. Residues Arg-62, Arg-179, and 185–187 (RLS) contribute to the substrate site. Glu-198 lines the Mg(2+) pocket.

The protein belongs to the UPP synthase family. As to quaternary structure, homodimer. Requires Mg(2+) as cofactor.

The enzyme catalyses 8 isopentenyl diphosphate + (2E,6E)-farnesyl diphosphate = di-trans,octa-cis-undecaprenyl diphosphate + 8 diphosphate. Catalyzes the sequential condensation of isopentenyl diphosphate (IPP) with (2E,6E)-farnesyl diphosphate (E,E-FPP) to yield (2Z,6Z,10Z,14Z,18Z,22Z,26Z,30Z,34E,38E)-undecaprenyl diphosphate (di-trans,octa-cis-UPP). UPP is the precursor of glycosyl carrier lipid in the biosynthesis of bacterial cell wall polysaccharide components such as peptidoglycan and lipopolysaccharide. This is Ditrans,polycis-undecaprenyl-diphosphate synthase ((2E,6E)-farnesyl-diphosphate specific) from Coxiella burnetii (strain RSA 493 / Nine Mile phase I).